The sequence spans 1061 residues: TonB-dependent transporter Oar (1061 aa).

An N-terminal signal peptide occupies residues Met1–Ala26. Positions Glu121 to Arg243 constitute a TBDR plug domain. Positions Glu248–Phe1061 constitute a TBDR beta-barrel domain. A disordered region spans residues Arg701–Gln722. Residues Gly709–Gln722 are compositionally biased toward polar residues.

This sequence belongs to the TonB-dependent receptor family. Interacts with TonB. Part of a transport system composed of the outer membrane transporter Oar, the trans-periplasmic binding protein TonB and the inner membrane proteins ExbB and ExbD.

It localises to the cell outer membrane. Functionally, required for secretion of the protease PopC across the bacterial outer membrane. Binds and probably transports PopC from the periplasm to the extracellular milieu. It derives its energy for transport by interacting with the trans-periplasmic membrane protein TonB. Required for cellular adhesion during fruiting body formation, a multicellular developmental program that is induced in response to starvation. This is TonB-dependent transporter Oar from Myxococcus xanthus.